The primary structure comprises 146 residues: Hemoglobin subunit beta (146 aa).

Val-1 is subject to N-acetylvaline. In terms of domain architecture, Globin spans 2–146; sequence HLTAEEKSLV…VANALAHKYH (145 aa). Phosphoserine is present on Ser-44. At Lys-59 the chain carries N6-acetyllysine. His-63 lines the heme b pocket. Lys-82 carries the N6-acetyllysine modification. His-92 contacts heme b. Cys-93 is modified (S-nitrosocysteine). Lys-144 is subject to N6-acetyllysine.

It belongs to the globin family. Heterotetramer of two alpha chains and two beta chains. As to expression, red blood cells.

In terms of biological role, involved in oxygen transport from the lung to the various peripheral tissues. This Canis latrans (Coyote) protein is Hemoglobin subunit beta (HBB).